A 365-amino-acid chain; its full sequence is MCSVRPAHAVIDLDALRHNYRFARRLGGGKALAVVKADAYGHGAVRCAQALEAEVDGFAVACIEEALELRQAGIQAPILLLEGFFEVEELELIAKHNLWTVIASSWQVRALAAFHSPSPIGVWLKLDSGMHRLGLEPKEFRDAWMSLHSLPQVGEVVLMTHLARADELDNPRTNEQASVFAHASQGMVAPASVCNSSGLLGWAGLYSDWGRPGLMLYGVNPISQESTSLSGPLRPVMMVYSKLIAVRELPAGEPVGYGASFVTERPTRVGVVAMGYADGYPYFAVNGTPLLVDGRVCPLIGRVSMDMLTVDLTDHPQADVGSQVQLWGVQPGVAELAAHCNLSAYQLLCGLKRVRRYYLGEMGAV.

Catalysis depends on Lys-36, which acts as the Proton acceptor; specific for D-alanine. Lys-36 is subject to N6-(pyridoxal phosphate)lysine. Arg-132 contributes to the substrate binding site. Tyr-257 acts as the Proton acceptor; specific for L-alanine in catalysis. Substrate is bound at residue Met-305.

Belongs to the alanine racemase family. Pyridoxal 5'-phosphate is required as a cofactor.

It carries out the reaction L-alanine = D-alanine. It participates in amino-acid biosynthesis; D-alanine biosynthesis; D-alanine from L-alanine: step 1/1. In terms of biological role, catalyzes the interconversion of L-alanine and D-alanine. May also act on other amino acids. This chain is Alanine racemase (alr), found in Xylella fastidiosa (strain Temecula1 / ATCC 700964).